The primary structure comprises 205 residues: Holliday junction branch migration complex subunit RuvA (205 aa).

The domain I stretch occupies residues 1-62 (MFEYVTGYVE…EDIMALYGFK (62 aa)). Positions 63–141 (TREERLLFTK…DVVPDAFVDL (79 aa)) are domain II. Residues 142–152 (FSDTESFDTKK) form a flexible linker region. Residues 153–205 (GSSVELDEALEALRALGYAEREVSRVVPELLKESLTTDQYIKKALSLLLNGKR) form a domain III region.

This sequence belongs to the RuvA family. As to quaternary structure, homotetramer. Forms an RuvA(8)-RuvB(12)-Holliday junction (HJ) complex. HJ DNA is sandwiched between 2 RuvA tetramers; dsDNA enters through RuvA and exits via RuvB. An RuvB hexamer assembles on each DNA strand where it exits the tetramer. Each RuvB hexamer is contacted by two RuvA subunits (via domain III) on 2 adjacent RuvB subunits; this complex drives branch migration. In the full resolvosome a probable DNA-RuvA(4)-RuvB(12)-RuvC(2) complex forms which resolves the HJ.

Its subcellular location is the cytoplasm. Functionally, the RuvA-RuvB-RuvC complex processes Holliday junction (HJ) DNA during genetic recombination and DNA repair, while the RuvA-RuvB complex plays an important role in the rescue of blocked DNA replication forks via replication fork reversal (RFR). RuvA specifically binds to HJ cruciform DNA, conferring on it an open structure. The RuvB hexamer acts as an ATP-dependent pump, pulling dsDNA into and through the RuvAB complex. HJ branch migration allows RuvC to scan DNA until it finds its consensus sequence, where it cleaves and resolves the cruciform DNA. This chain is Holliday junction branch migration complex subunit RuvA, found in Bacillus mycoides (strain KBAB4) (Bacillus weihenstephanensis).